A 924-amino-acid polypeptide reads, in one-letter code: MEIKEEGASEEGQHFLPTAQASDPGDCQFTSIQKTPNEPQLEFILACKDLVAPVRDRKLNTLVQISVIHPVEQSLTRYSSTEIVEGTRDPLFLTGVTFPSEYPIYEETKIKLTVYDVKDKSHDTVRTSVLPEHKDSPPEIGRSFLGYASFKVGELLKSKEQLLVLSLRTSDGGKVVGTIEVSVVKMGEIEDGEADHITTDIQGQKCALVCECTAPESVSGKDNLPFLNSVLKNPVCKLYRFPTSDNKWMRIREQMSESILSFHIPKELISLHIKEDLCRNQEIKELGELSPHWDNLRKNVLTHCDQMVNMYQDILTELSKETGSSFKSSSSKGDKTLEFVPINLHLQRMQVHSPHLKDALYDVITVGAPAAHFQGFKNGGLRKLLHRFETERRNTGYQFIYYSPENTAKAKEVLSNINQLQPLIATHADLLLNSASQHSPDSLKNSLKMLSEKTELFVHAFKDQLVRSALLALYTARPGGILKKPPSPKSSTEESSPQDQPPLMRGQDSIPHHSDYDEEEWDRVWANVGKSLNCIIAMVDKLIERDGGSEGSGGNNDGEKEPSLADAIPSHPREDWYEQLYPLILTLKDCMGEVVNRAKQSLTFVLLQELAYSLPQCLMLTLRRDVVFSQALAGLVCGFIIKLQTSLYDPGFLRQLHTVGLIVQYEGLLSTYSDEIGMLEDMAVGISDLKKVAFKIIEAKSNDVLPVITGRREHYVVEVKLPARMFESLPLQIKEGQLLHVYPVLFNVGINEQQTLAERFGDVSLQESINQENFELLQEYYKIFMEKMPPDYISHFQEQNDLKALLENLLQNIQSKKRKNVEIMWLAATICRKLNGIRFTCCKSAKDRTSMSVTLEQCSILRDEHQLHKDFFIRALDCMRREGCRIENVLKNIKCRKYAFNMLQLMAFPKYYRPPEGTYGKADT.

The segment covering 1 to 13 has biased composition (basic and acidic residues); sequence MEIKEEGASEEGQ. Disordered stretches follow at residues 1–25, 481–516, and 546–569; these read MEIKEEGASEEGQHFLPTAQASDPG, ILKKPPSPKSSTEESSPQDQPPLMRGQDSIPHHSDY, and DGGSEGSGGNNDGEKEPSLADAIP. The region spanning 23 to 165 is the C2 domain; it reads DPGDCQFTSI…LKSKEQLLVL (143 aa).

Belongs to the inositol 3,4-bisphosphate 4-phosphatase family.

The catalysed reaction is a 1,2-diacyl-sn-glycero-3-phospho-(1D-myo-inositol-3,4-bisphosphate) + H2O = a 1,2-diacyl-sn-glycero-3-phospho-(1D-myo-inositol-3-phosphate) + phosphate. It catalyses the reaction 1D-myo-inositol 1,3,4-trisphosphate + H2O = 1D-myo-inositol 1,3-bisphosphate + phosphate. It carries out the reaction 1D-myo-inositol 3,4-bisphosphate + H2O = 1D-myo-inositol 3-phosphate + phosphate. The protein operates within signal transduction; phosphatidylinositol signaling pathway. Strongly inhibited by inositol hexakisphosphate. Catalyzes the hydrolysis of the 4-position phosphate of phosphatidylinositol 3,4-bisphosphate, inositol 1,3,4-trisphosphate and inositol 3,4-bisphosphate. Plays a role in the late stages of macropinocytosis by dephosphorylating phosphatidylinositol 3,4-bisphosphate in membrane ruffles. Antagonizes the PI3K-AKT/PKB signaling pathway by dephosphorylating phosphoinositides and thereby modulating cell cycle progression and cell survival. The sequence is that of Type II inositol 3,4-bisphosphate 4-phosphatase (INPP4B) from Pongo abelii (Sumatran orangutan).